A 376-amino-acid polypeptide reads, in one-letter code: uncharacterized protein (376 aa).

A signal peptide spans 1–28 (MCKPRVWRIAHTIVHVGALLLGTSQLTT). Cysteine 29 carries the N-palmitoyl cysteine lipid modification. Cysteine 29 is lipidated: S-diacylglycerol cysteine.

This sequence belongs to the TP013X lipoprotein family.

It is found in the cell membrane. This is an uncharacterized protein from Treponema pallidum (strain Nichols).